Here is a 476-residue protein sequence, read N- to C-terminus: Glycogen synthase (476 aa).

K15 serves as a coordination point for ADP-alpha-D-glucose.

The protein belongs to the glycosyltransferase 1 family. Bacterial/plant glycogen synthase subfamily.

It carries out the reaction [(1-&gt;4)-alpha-D-glucosyl](n) + ADP-alpha-D-glucose = [(1-&gt;4)-alpha-D-glucosyl](n+1) + ADP + H(+). It participates in glycan biosynthesis; glycogen biosynthesis. Synthesizes alpha-1,4-glucan chains using ADP-glucose. This is Glycogen synthase from Leptospira biflexa serovar Patoc (strain Patoc 1 / Ames).